The following is a 210-amino-acid chain: Guanylate kinase (210 aa).

The region spanning 6–186 (GVILVLSSPS…TADRISNILR (181 aa)) is the Guanylate kinase-like domain. 13–20 (SPSGCGKT) contacts ATP.

The protein belongs to the guanylate kinase family.

It localises to the cytoplasm. The catalysed reaction is GMP + ATP = GDP + ADP. Its function is as follows. Essential for recycling GMP and indirectly, cGMP. The sequence is that of Guanylate kinase from Anaplasma phagocytophilum (strain HZ).